Consider the following 96-residue polypeptide: Cell division protein FtsB (96 aa).

Residues 1-11 (MDIKSNSFFYI) are Cytoplasmic-facing. The helical transmembrane segment at 12–29 (FISVVLLLIAILQYDLWF) threads the bilayer. Residues 30–96 (SNTGFIKYQA…KQGEVFYSVK (67 aa)) are Periplasmic-facing.

The protein belongs to the FtsB family. In terms of assembly, part of a complex composed of FtsB, FtsL and FtsQ.

The protein resides in the cell inner membrane. In terms of biological role, essential cell division protein. May link together the upstream cell division proteins, which are predominantly cytoplasmic, with the downstream cell division proteins, which are predominantly periplasmic. The chain is Cell division protein FtsB from Francisella tularensis subsp. tularensis (strain SCHU S4 / Schu 4).